Consider the following 42-residue polypeptide: Photosystem I reaction center subunit IX (42 aa).

The chain crosses the membrane as a helical span at residues 7-27; sequence YLSVAPVLSTLWFGALAGLLI.

The protein belongs to the PsaJ family.

It is found in the plastid. The protein localises to the chloroplast thylakoid membrane. Its function is as follows. May help in the organization of the PsaE and PsaF subunits. This Agrostis stolonifera (Creeping bentgrass) protein is Photosystem I reaction center subunit IX.